The primary structure comprises 326 residues: Probable magnesium transporter NIPA7 (326 aa).

Residues 1-4 (MVSD) lie on the Extracellular side of the membrane. A helical membrane pass occupies residues 5 to 25 (NEMGLVLAVSSSVFIGSSFIL). The Cytoplasmic portion of the chain corresponds to 26–51 (KKKGLKRAAANGTRAGFGGYTYLLEP). The chain crosses the membrane as a helical span at residues 52–72 (LWWVGLVTMTFGEIANFVAYV). Topologically, residues 73-76 (YAPA) are extracellular. Residues 77–97 (VLVTPLGALSIIISAVLAHFL) form a helical membrane-spanning segment. Over 98–104 (LDEKLRK) the chain is Cytoplasmic. The chain crosses the membrane as a helical span at residues 105–125 (MGVWGCVCCIVGSVMIVIHAP). At 126–142 (QEQTPNSVEEIWKLAMQ) the chain is on the extracellular side. A helical transmembrane segment spans residues 143–163 (PAFLIYVAISMSIVLALILYC). Residues 164–169 (EPLCGQ) lie on the Cytoplasmic side of the membrane. Residues 170 to 190 (TNILVYIGICSLMGSLTVMSI) form a helical membrane-spanning segment. At 191–209 (KAVGIAIKLTFEGINQIWY) the chain is on the extracellular side. A helical transmembrane segment spans residues 210-230 (PETWFFAMVAAICVVMQMIYL). At 231–240 (NKALDTFNAA) the chain is on the cytoplasmic side. The chain crosses the membrane as a helical span at residues 241–261 (IVSPIYYVMFTTLTIVASAIM). The Extracellular portion of the chain corresponds to 262 to 272 (FKDWNGQNTDS). Residues 273–293 (IASEICGFITVLTGTVILHST) traverse the membrane as a helical segment. Topologically, residues 294–326 (REEEQASPRRMRWQDSGKSFDEEHLTSLYSPEY) are cytoplasmic.

The protein belongs to the NIPA (TC 2.A.7) family. Homodimer.

It localises to the cell membrane. The protein localises to the early endosome. Functionally, acts as a Mg(2+) transporter. Can also transport other divalent cations such as Fe(2+), Sr(2+), Ba(2+), Mn(2+) and Co(2+) but to a much less extent than Mg(2+). The polypeptide is Probable magnesium transporter NIPA7 (Arabidopsis thaliana (Mouse-ear cress)).